The primary structure comprises 226 residues: Putative type II restriction enzyme MjaVIP (226 aa).

Belongs to the BsaWI type II restriction endonuclease family.

The enzyme catalyses Endonucleolytic cleavage of DNA to give specific double-stranded fragments with terminal 5'-phosphates.. Its function is as follows. A P subtype restriction enzyme that recognizes the double-stranded sequence 5'-CCGG-3'; the cleavage site is unknown. This is Putative type II restriction enzyme MjaVIP (mjaVIRP) from Methanocaldococcus jannaschii (strain ATCC 43067 / DSM 2661 / JAL-1 / JCM 10045 / NBRC 100440) (Methanococcus jannaschii).